An 808-amino-acid polypeptide reads, in one-letter code: Phospholipase D alpha 1 (808 aa).

A propeptide spanning residues 1-30 (MAQISLHGTLHVTIYEVDKLHSGGGPHFFR) is cleaved from the precursor. In terms of domain architecture, C2 spans 1–125 (MAQISLHGTL…LDGEEIDRWV (125 aa)). Residue aspartate 186 participates in Ca(2+) binding. One can recognise a PLD phosphodiesterase 1 domain in the interval 326 to 364 (TMFTHHQKIVVVDSAMPNGDSQRRRIVSFVGGLDLCDGR). Catalysis depends on residues histidine 331, lysine 333, and aspartate 338. Histidine 331 is an a 1,2-diacyl-sn-glycero-3-phosphate binding site. 2 residues coordinate Ca(2+): histidine 370 and histidine 404. Positions 520 and 659 each coordinate a 1,2-diacyl-sn-glycero-3-phosphate. A PLD phosphodiesterase 2 domain is found at 654–681 (FMIYVHTKMMIVDDEYIIIGSANINQRS). Active-site residues include histidine 659, lysine 661, and aspartate 666. Glutamate 720 serves as a coordination point for Ca(2+).

The protein belongs to the phospholipase D family. C2-PLD subfamily. Ca(2+) serves as cofactor. Expression is higher in radicle than in endosperm.

It is found in the cytoplasm. It localises to the membrane. Its subcellular location is the vacuole. The protein localises to the endoplasmic reticulum. The protein resides in the plastid. It is found in the cell membrane. It catalyses the reaction a 1,2-diacyl-sn-glycero-3-phosphocholine + H2O = a 1,2-diacyl-sn-glycero-3-phosphate + choline + H(+). Functionally, hydrolyzes glycerol-phospholipids at the terminal phosphodiesteric bond. Plays an important role in various cellular processes, including phytohormone action, vesicular trafficking, secretion, cytoskeletal arrangement, meiosis, tumor promotion, pathogenesis, membrane deterioration and senescence. This is Phospholipase D alpha 1 (PLD1) from Ricinus communis (Castor bean).